Here is a 105-residue protein sequence, read N- to C-terminus: DNA-directed RNA polymerase subunit omega (105 aa).

It belongs to the RNA polymerase subunit omega family. The RNAP catalytic core consists of 2 alpha, 1 beta, 1 beta' and 1 omega subunit. When a sigma factor is associated with the core the holoenzyme is formed, which can initiate transcription.

The catalysed reaction is RNA(n) + a ribonucleoside 5'-triphosphate = RNA(n+1) + diphosphate. Promotes RNA polymerase assembly. Latches the N- and C-terminal regions of the beta' subunit thereby facilitating its interaction with the beta and alpha subunits. The sequence is that of DNA-directed RNA polymerase subunit omega from Streptococcus equi subsp. equi (strain 4047).